The primary structure comprises 388 residues: Nesprin-4 (388 aa).

The Cytoplasmic segment spans residues 1-339 (MALVPPLGRE…GVPAPASKRP (339 aa)). Positions 60–92 (ELKSTESATSPSRLPLASSHEHQDGGKPCEHSD) are disordered. Positions 78 to 92 (SHEHQDGGKPCEHSD) are enriched in basic and acidic residues. Positions 331–388 (VPAPASKRPLTLFFLLLFLLLVGATLLLPLSGVSCCSHARLARTPYLVLSYVNGLPPI) constitute a KASH domain. The helical; Anchor for type IV membrane protein transmembrane segment at 340–360 (LTLFFLLLFLLLVGATLLLPL) threads the bilayer. Residues 361-388 (SGVSCCSHARLARTPYLVLSYVNGLPPI) are Perinuclear space-facing.

The protein belongs to the nesprin family. As to quaternary structure, core component of LINC complexes which are composed of inner nuclear membrane SUN domain-containing proteins coupled to outer nuclear membrane KASH domain-containing nesprins. SUN and KASH domain-containing proteins seem to bind each other promiscuously; however, differentially expression of LINC complex constituents can give rise to specific assemblies. Probably part of a SUN1-containing LINC complex. Interacts with kinesins KIF5B and KLC1. In terms of processing, the disulfid bond with SUN1 or SUN2 is required for stability of the respective LINC complex under tensile forces. In terms of tissue distribution, expressed in secretory epithelial cells, such as those found in exocrine pancreas, bulbourethral gland, mammary gland and salivary gland (at protein level). Also expressed in the cochlea, where it is restricted primarily to the 3 rows of outer hair cells and 1 row of inner hair cells (at protein level). Not detected in other cells of the cochlea, including Deiter's cells and pillar cells, nor in liver and kidney (at protein level).

It localises to the nucleus outer membrane. Its function is as follows. As a component of the LINC (LInker of Nucleoskeleton and Cytoskeleton) complex, involved in the connection between the nuclear lamina and the cytoskeleton. The nucleocytoplasmic interactions established by the LINC complex play an important role in the transmission of mechanical forces across the nuclear envelope and in nuclear movement and positioning. Behaves as a kinesin cargo, providing a functional binding site for kinesin-1 at the nuclear envelope. Hence may contribute to the establishment of secretory epithelial morphology, by promoting kinesin-dependent apical migration of the centrosome and Golgi apparatus and basal localization of the nucleus. The protein is Nesprin-4 (Syne4) of Mus musculus (Mouse).